A 406-amino-acid chain; its full sequence is FBD-associated F-box protein At1g60410 (406 aa).

An F-box domain is found at 9–59 (KDRLSDLPCHLLCRILSNLSTKESVRTSVLSPRWSNLWSLVSVLDLDFQDF). Positions 355–405 (MEEIKLSPVPQCVLSSLDFLQLKAPSTPSKMKLATYFRKKCTRLTKMLLSG) constitute an FBD domain.

This is FBD-associated F-box protein At1g60410 from Arabidopsis thaliana (Mouse-ear cress).